The following is a 932-amino-acid chain: Alanine--tRNA ligase, mitochondrial (932 aa).

Residues 458–480 (SRLTWNTSSSSSDQTTQQTTQLP) are disordered. Low complexity predominate over residues 464–478 (TSSSSSDQTTQQTTQ). Zn(2+) is bound by residues H610, H614, C713, and H717.

Belongs to the class-II aminoacyl-tRNA synthetase family. In terms of assembly, monomer. The cofactor is Zn(2+).

It is found in the mitochondrion. The catalysed reaction is tRNA(Ala) + L-alanine + ATP = L-alanyl-tRNA(Ala) + AMP + diphosphate. Its function is as follows. Catalyzes the attachment of alanine to tRNA(Ala) in a two-step reaction: alanine is first activated by ATP to form Ala-AMP and then transferred to the acceptor end of tRNA(Ala). Also edits incorrectly charged tRNA(Ala) via its editing domain. This Dictyostelium discoideum (Social amoeba) protein is Alanine--tRNA ligase, mitochondrial (malaS).